The following is a 430-amino-acid chain: Ribosomal protein uS12 methylthiotransferase RimO (430 aa).

The MTTase N-terminal domain occupies 1–116; it reads MRVGIKVLGC…IANAIENGTD (116 aa). C10, C46, C79, C148, C152, and C155 together coordinate [4Fe-4S] cluster. A Radical SAM core domain is found at 134–365; the sequence is LEERPYAYVK…LLQAEISNSR (232 aa). Residues 367 to 430 enclose the TRAM domain; sequence DRFVGKKLKF…DEYDMWGSVI (64 aa).

This sequence belongs to the methylthiotransferase family. RimO subfamily. As to quaternary structure, monomer. The cofactor is [4Fe-4S] cluster.

Its subcellular location is the cytoplasm. The catalysed reaction is L-aspartate(89)-[ribosomal protein uS12]-hydrogen + (sulfur carrier)-SH + AH2 + 2 S-adenosyl-L-methionine = 3-methylsulfanyl-L-aspartate(89)-[ribosomal protein uS12]-hydrogen + (sulfur carrier)-H + 5'-deoxyadenosine + L-methionine + A + S-adenosyl-L-homocysteine + 2 H(+). In terms of biological role, catalyzes the methylthiolation of an aspartic acid residue of ribosomal protein uS12. In Thermotoga maritima (strain ATCC 43589 / DSM 3109 / JCM 10099 / NBRC 100826 / MSB8), this protein is Ribosomal protein uS12 methylthiotransferase RimO.